The chain runs to 319 residues: MNQGKRVGIIGAGNVGATVAYSLAMLGSCHEIILRDNKIDVAKGKALDMSQAAAAVRSHTIVSVAEEMADLTNCDVVVVTAGSPRLPGMSRDDLLMINANITKDVIAGVAKYSPDAIIIMVSNPLDAMTYVALKESGFDRSRVIGMAGILDSARMASFIQEKLGYGGGQIRASVMGGHGDDMVPLARYSTVAGVPLTDLMSTSEINEIVIRTRNGGAEIVGHLKTGSAYYAPAKATALMVEAILKDTKQIHPCAVFLEGEYGHSDVVSGVPVMLGANGAEKIIEISLDESEKIMFEGSCNSVRTLIDTLNKNKFFDKGE.

Residues 11 to 16 (GAGNVG) and aspartate 36 each bind NAD(+). Residues arginine 85 and arginine 91 each contribute to the substrate site. Residues asparagine 98 and 121–123 (VSN) each bind NAD(+). 2 residues coordinate substrate: asparagine 123 and arginine 154. Catalysis depends on histidine 178, which acts as the Proton acceptor.

It belongs to the LDH/MDH superfamily. MDH type 3 family.

It catalyses the reaction (S)-malate + NAD(+) = oxaloacetate + NADH + H(+). Its function is as follows. Catalyzes the reversible oxidation of malate to oxaloacetate. The polypeptide is Malate dehydrogenase (Sulfurimonas denitrificans (strain ATCC 33889 / DSM 1251) (Thiomicrospira denitrificans (strain ATCC 33889 / DSM 1251))).